A 148-amino-acid chain; its full sequence is Transcriptional regulator MraZ (148 aa).

2 SpoVT-AbrB domains span residues 5–53 (ETAI…AEKE) and 82–125 (SAVL…SEQA).

It belongs to the MraZ family. Forms oligomers.

It localises to the cytoplasm. The protein resides in the nucleoid. The chain is Transcriptional regulator MraZ from Xanthomonas oryzae pv. oryzae (strain MAFF 311018).